A 207-amino-acid chain; its full sequence is Myosin light chain 6B (207 aa).

A disordered region spans residues 1–50; that stretch reads MPPKKDAPVKKPAGPSISKPAAKSTPGTPLAKAKAEPAAPQAPAKSQEPP. Low complexity predominate over residues 36-50; the sequence is EPAAPQAPAKSQEPP. EF-hand domains are found at residues 63 to 98, 140 to 175, and 175 to 207; these read DQLEEFREAFELFDRVGDGKILYSQCGDLMRALGQN, GTYEDYLEGLRVFDKEGNGKVMGAELRHVLTTLGEK, and KMTEEEVETVLAGHEDSNGCINYEAFLKHILSL.

Myosin is a hexamer of 2 heavy chains and 4 light chains.

Functionally, regulatory light chain of myosin. Does not bind calcium. The polypeptide is Myosin light chain 6B (Mus musculus (Mouse)).